A 147-amino-acid polypeptide reads, in one-letter code: Hemoglobin subunit deltaH (147 aa).

The region spanning 3–147 (RLTDSEKAEV…MANALAHKYH (145 aa)) is the Globin domain. The heme b site is built by histidine 64 and histidine 93.

This sequence belongs to the globin family. Heterotetramer of two delta chains and two alpha chains. As to expression, red blood cells.

This is Hemoglobin subunit deltaH (HBD) from Dendrohyrax dorsalis (Beecroft's tree hyrax).